The following is a 325-amino-acid chain: Interferon regulatory factor 1 (325 aa).

Positions 5-113 form a DNA-binding region, IRF tryptophan pentad repeat; it reads RMRMRPWLEM…SAVRVYRMLP (109 aa). Residue lysine 78 is modified to N6-acetyllysine. Residues 92–165 form a disordered region; the sequence is EEVKDQSRNK…TLPDDHSSYT (74 aa). Positions 141 to 157 are enriched in polar residues; it reads GDSSPDTFSDGLSSSTL. Residues lysine 275 and lysine 299 each participate in a glycyl lysine isopeptide (Lys-Gly) (interchain with G-Cter in SUMO) cross-link.

This sequence belongs to the IRF family. Monomer. Homodimer. Interacts with EP300. Interacts with MYD88. Interacts with PIAS3. Interacts with SPOP. Phosphorylated by CK2 and this positively regulates its activity. In terms of processing, sumoylation represses the transcriptional activity and displays enhanced resistance to protein degradation. Sumoylated by UBE2I/UBC9 and SUMO1. Inactivates the tumor suppressor activity. Elevated levels in tumor cells. Major site is Lys-275. Sumoylation is enhanced by PIAS3. Desumoylated by SENP1 in tumor cells and appears to compete with ubiquitination on C-terminal sites. Post-translationally, ubiquitinated in a SPOP-depedent manner. Appears to compete with sumoylation on C-terminal sites.

The protein localises to the nucleus. It localises to the cytoplasm. With respect to regulation, activated by MYD88. Its function is as follows. Transcriptional regulator which displays a remarkable functional diversity in the regulation of cellular responses. Regulates transcription of IFN and IFN-inducible genes, host response to viral and bacterial infections, regulation of many genes expressed during hematopoiesis, inflammation, immune responses and cell proliferation and differentiation, regulation of the cell cycle and induction of growth arrest and programmed cell death following DNA damage. Stimulates both innate and acquired immune responses through the activation of specific target genes and can act as a transcriptional activator and repressor regulating target genes by binding to an interferon-stimulated response element (ISRE) in their promoters. Has an essentail role in IFNG-dependent immunity to mycobacteria. Competes with the transcriptional repressor ZBED2 for binding to a common consensus sequence in gene promoters. Its target genes for transcriptional activation activity include: genes involved in anti-viral response, such as IFN-alpha/beta, RIGI, TNFSF10/TRAIL, ZBP1, OAS1/2, PIAS1/GBP, EIF2AK2/PKR and RSAD2/viperin; antibacterial response, such as GBP2, GBP5 and NOS2/INOS; anti-proliferative response, such as p53/TP53, LOX and CDKN1A; apoptosis, such as BBC3/PUMA, CASP1, CASP7 and CASP8; immune response, such as IL7, IL12A/B and IL15, PTGS2/COX2 and CYBB; DNA damage responses and DNA repair, such as POLQ/POLH; MHC class I expression, such as TAP1, PSMB9/LMP2, PSME1/PA28A, PSME2/PA28B and B2M and MHC class II expression, such as CIITA; metabolic enzymes, such as ACOD1/IRG1. Represses genes involved in anti-proliferative response, such as BIRC5/survivin, CCNB1, CCNE1, CDK1, CDK2 and CDK4 and in immune response, such as FOXP3, IL4, ANXA2 and TLR4. Stimulates p53/TP53-dependent transcription through enhanced recruitment of EP300 leading to increased acetylation of p53/TP53. Plays an important role in immune response directly affecting NK maturation and activity, macrophage production of IL12, Th1 development and maturation of CD8+ T-cells. Also implicated in the differentiation and maturation of dendritic cells and in the suppression of regulatory T (Treg) cells development. Acts as a tumor suppressor and plays a role not only in antagonism of tumor cell growth but also in stimulating an immune response against tumor cells. This chain is Interferon regulatory factor 1 (IRF1), found in Homo sapiens (Human).